The following is a 445-amino-acid chain: Phosphoglucosamine mutase (445 aa).

Ser102 functions as the Phosphoserine intermediate in the catalytic mechanism. 4 residues coordinate Mg(2+): Ser102, Asp240, Asp242, and Asp244. Ser102 is modified (phosphoserine).

The protein belongs to the phosphohexose mutase family. Mg(2+) is required as a cofactor. Post-translationally, activated by phosphorylation.

It catalyses the reaction alpha-D-glucosamine 1-phosphate = D-glucosamine 6-phosphate. In terms of biological role, catalyzes the conversion of glucosamine-6-phosphate to glucosamine-1-phosphate. The polypeptide is Phosphoglucosamine mutase (Mycobacterium sp. (strain JLS)).